The primary structure comprises 745 residues: Aminopeptidase NAALADL1 (745 aa).

The Cytoplasmic segment spans residues 1 to 6 (MHWAKI). Residues 7-28 (LGVGIGAAALLGLGIILGHFAI) form a helical; Signal-anchor for type II membrane protein membrane-spanning segment. Residues 29-745 (PKATEPLASS…AATLQPVTDL (717 aa)) lie on the Extracellular side of the membrane. 3 N-linked (GlcNAc...) asparagine glycosylation sites follow: Asn128, Asn141, and Asn235. The Ca(2+) site is built by Thr263 and Leu266. N-linked (GlcNAc...) asparagine glycans are attached at residues Asn279, Asn304, and Asn350. Cys301 and Cys318 form a disulfide bridge. Zn(2+) is bound by residues His373 and Asp383. Residue Glu421 is the Proton donor/acceptor of the active site. Zn(2+) is bound at residue Glu422. Glu430 and Glu433 together coordinate Ca(2+). Asp450 lines the Zn(2+) pocket. Residues Asn456 and Asn497 are each glycosylated (N-linked (GlcNAc...) asparagine). His550 is a Zn(2+) binding site. Residues Asn593 and Asn620 are each glycosylated (N-linked (GlcNAc...) asparagine).

Belongs to the peptidase M28 family. M28B subfamily. In terms of assembly, homodimer. The cofactor is Zn(2+). N-glycosylated. In terms of tissue distribution, detected on apical villi on the brush border membrane of ileum enterocytes (at protein level). Mainly expressed in the distal small intestine.

It localises to the apical cell membrane. Its function is as follows. Aminopeptidase with broad substrate specificity. Has lower activity with substrates that have Asp or Glu in the P2' position, or Pro in the P3' position. Lacks activity with substrates that have both Pro in the P3' position and Asp or Glu in the P2' position. Lacks carboxypeptidase activity. Lacks dipeptidyl-peptidase IV type activity. This is Aminopeptidase NAALADL1 (Naaladl1) from Rattus norvegicus (Rat).